The following is a 1339-amino-acid chain: Aldehyde oxidase 1 (1339 aa).

One can recognise a 2Fe-2S ferredoxin-type domain in the interval 5–92; it reads SELLFYVNGR…GAAVTTVEGI (88 aa). The [2Fe-2S] cluster site is built by Cys44, Cys49, Cys52, and Cys74. Gln113 lines the Mo-molybdopterin pocket. The [2Fe-2S] cluster site is built by Cys114, Cys117, Cys149, and Cys151. Mo-molybdopterin is bound at residue Cys151. In terms of domain architecture, FAD-binding PCMH-type spans 236–421; the sequence is FGSDRMTWIS…ISVNIPYSRK (186 aa). FAD contacts are provided by residues 264 to 271, Ala345, Ser354, His358, Asp367, and Leu411; that span reads VVMGNTSV. Mo-molybdopterin contacts are provided by residues 807–808 and Met1048; that span reads AF. Phosphoserine is present on Ser1069. Mo-molybdopterin contacts are provided by residues 1089–1092, Gln1204, and Leu1269; that span reads GSVV. Catalysis depends on Glu1271, which acts as the Proton acceptor; for azaheterocycle hydroxylase activity.

It belongs to the xanthine dehydrogenase family. Homodimer. It depends on [2Fe-2S] cluster as a cofactor. The cofactor is FAD. Requires Mo-molybdopterin as cofactor. Post-translationally, the N-terminus is blocked. In terms of tissue distribution, expressed at high levels in liver, lung and spleen. Also expressed in kindey, eye, testis, duodenum, esophagus and thymus (at protein level).

Its subcellular location is the cytoplasm. The enzyme catalyses an aldehyde + O2 + H2O = a carboxylate + H2O2 + H(+). It catalyses the reaction retinal + O2 + H2O = retinoate + H2O2 + H(+). Its function is as follows. Oxidase with broad substrate specificity, oxidizing aromatic azaheterocycles, such as N1-methylnicotinamide, N-methylphthalazinium and phthalazine, as well as aldehydes, such as benzaldehyde, retinal, pyridoxal, and vanillin. Plays a key role in the metabolism of xenobiotics and drugs containing aromatic azaheterocyclic substituents. Is probably involved in the regulation of reactive oxygen species homeostasis. May be a prominent source of superoxide generation via the one-electron reduction of molecular oxygen. May also catalyze nitric oxide (NO) production via the reduction of nitrite to NO with NADH or aldehyde as electron donor. May play a role in adipogenesis. The protein is Aldehyde oxidase 1 of Bos taurus (Bovine).